The sequence spans 355 residues: Ferrochelatase (355 aa).

The Fe cation site is built by His-214 and Glu-295.

The protein belongs to the ferrochelatase family.

Its subcellular location is the cytoplasm. It catalyses the reaction heme b + 2 H(+) = protoporphyrin IX + Fe(2+). It functions in the pathway porphyrin-containing compound metabolism; protoheme biosynthesis; protoheme from protoporphyrin-IX: step 1/1. In terms of biological role, catalyzes the ferrous insertion into protoporphyrin IX. This Burkholderia thailandensis (strain ATCC 700388 / DSM 13276 / CCUG 48851 / CIP 106301 / E264) protein is Ferrochelatase.